Here is a 419-residue protein sequence, read N- to C-terminus: Serine hydroxymethyltransferase 2 (419 aa).

Residues L120 and 124–126 (GHL) each bind (6S)-5,6,7,8-tetrahydrofolate. K229 is modified (N6-(pyridoxal phosphate)lysine).

It belongs to the SHMT family. In terms of assembly, homodimer. Pyridoxal 5'-phosphate serves as cofactor.

The protein localises to the cytoplasm. The catalysed reaction is (6R)-5,10-methylene-5,6,7,8-tetrahydrofolate + glycine + H2O = (6S)-5,6,7,8-tetrahydrofolate + L-serine. The protein operates within one-carbon metabolism; tetrahydrofolate interconversion. Its pathway is amino-acid biosynthesis; glycine biosynthesis; glycine from L-serine: step 1/1. Functionally, catalyzes the reversible interconversion of serine and glycine with tetrahydrofolate (THF) serving as the one-carbon carrier. This reaction serves as the major source of one-carbon groups required for the biosynthesis of purines, thymidylate, methionine, and other important biomolecules. Also exhibits THF-independent aldolase activity toward beta-hydroxyamino acids, producing glycine and aldehydes, via a retro-aldol mechanism. The polypeptide is Serine hydroxymethyltransferase 2 (Salmonella typhi).